Consider the following 837-residue polypeptide: Striatin-interacting protein 1 (837 aa).

Residue M1 is modified to N-acetylmethionine. Disordered regions lie at residues 1–66 (MEPA…SESP) and 333–423 (AASP…KGLP). Positions 18-35 (PQPPPPPPPATAQPPPGA) are enriched in pro residues. A compositionally biased stretch (basic and acidic residues) spans 47–60 (KAREFNRNQRKDSE). Phosphoserine occurs at positions 59, 335, and 339. Basic and acidic residues predominate over residues 356 to 377 (KALIKQDNLDAFNERDPYKADD). A compositionally biased stretch (acidic residues) spans 378–391 (SREEEEENDDDNSL). S788 carries the phosphoserine modification. The segment at 796–837 (DNCLQSVLGQRVDLPEDFQMNYDLWLEREVFSKPISWEELLQ) is required for STRIPAK core complex formation.

The protein belongs to the STRIP family. As to quaternary structure, part of the core of STRIPAK complexes composed of PP2A catalytic and scaffolding subunits, the striatins (PP2A regulatory subunits), the striatin-associated proteins MOB4, STRIP1 and STRIP2, PDCD10 and members of the STE20 kinases, such as STK24 and STK26. The STRIPAK complex can be extended by adapter proteins such as SLMAP:SIKE1, CTTNBP2 or CTTNBP2NL. Interacts with CDC42BPB. Interacts with CTTNBP2NL.

It is found in the cytoplasm. Plays a role in the regulation of cell morphology and cytoskeletal organization. Required in the cortical actin filament dynamics and cell shape. Part of the striatin-interacting phosphatase and kinase (STRIPAK) complexes. STRIPAK complexes have critical roles in protein (de)phosphorylation and are regulators of multiple signaling pathways including Hippo, MAPK, nuclear receptor and cytoskeleton remodeling. Different types of STRIPAK complexes are involved in a variety of biological processes such as cell growth, differentiation, apoptosis, metabolism and immune regulation. The sequence is that of Striatin-interacting protein 1 (STRIP1) from Macaca fascicularis (Crab-eating macaque).